We begin with the raw amino-acid sequence, 208 residues long: Small ribosomal subunit protein uS4 (208 aa).

The S4 RNA-binding domain maps to 98-159 (LRLDNVVFRL…RSKKVVRITE (62 aa)).

This sequence belongs to the universal ribosomal protein uS4 family. In terms of assembly, part of the 30S ribosomal subunit. Contacts protein S5. The interaction surface between S4 and S5 is involved in control of translational fidelity.

Functionally, one of the primary rRNA binding proteins, it binds directly to 16S rRNA where it nucleates assembly of the body of the 30S subunit. Its function is as follows. With S5 and S12 plays an important role in translational accuracy. The polypeptide is Small ribosomal subunit protein uS4 (Anaeromyxobacter dehalogenans (strain 2CP-1 / ATCC BAA-258)).